Reading from the N-terminus, the 312-residue chain is DNA-directed RNA polymerase subunit alpha (312 aa).

The interval 1–229 (MLQYQIERID…ELFQPLATVT (229 aa)) is alpha N-terminal domain (alpha-NTD). Positions 240 to 312 (PSPEAQIPLE…ISIPQSRTSV (73 aa)) are alpha C-terminal domain (alpha-CTD).

Belongs to the RNA polymerase alpha chain family. In cyanobacteria the RNAP catalytic core is composed of 2 alpha, 1 beta, 1 beta', 1 gamma and 1 omega subunit. When a sigma factor is associated with the core the holoenzyme is formed, which can initiate transcription.

The catalysed reaction is RNA(n) + a ribonucleoside 5'-triphosphate = RNA(n+1) + diphosphate. Its function is as follows. DNA-dependent RNA polymerase catalyzes the transcription of DNA into RNA using the four ribonucleoside triphosphates as substrates. The sequence is that of DNA-directed RNA polymerase subunit alpha from Prochlorococcus marinus (strain MIT 9301).